The sequence spans 485 residues: NADH-quinone oxidoreductase subunit N (485 aa).

The next 14 membrane-spanning stretches (helical) occupy residues 8-28, 35-55, 75-95, 105-125, 127-147, 159-179, 203-223, 235-255, 271-291, 297-317, 326-346, 374-394, 408-430, and 455-475; these read LIAL…MLSI, FLNA…LWFV, LYTG…YPWL, FYLL…ANHL, ALFL…GYAF, YTIL…LVYA, LLAG…LVPF, PAPV…GVVM, VVLG…ALSQ, LLGY…IALQ, VGVY…VVSL, AVMT…GFIG, WWLV…RVAV, and IVVL…QPLI.

Belongs to the complex I subunit 2 family. NDH-1 is composed of 13 different subunits. Subunits NuoA, H, J, K, L, M, N constitute the membrane sector of the complex.

It localises to the cell inner membrane. The enzyme catalyses a quinone + NADH + 5 H(+)(in) = a quinol + NAD(+) + 4 H(+)(out). In terms of biological role, NDH-1 shuttles electrons from NADH, via FMN and iron-sulfur (Fe-S) centers, to quinones in the respiratory chain. The immediate electron acceptor for the enzyme in this species is believed to be ubiquinone. Couples the redox reaction to proton translocation (for every two electrons transferred, four hydrogen ions are translocated across the cytoplasmic membrane), and thus conserves the redox energy in a proton gradient. This chain is NADH-quinone oxidoreductase subunit N, found in Klebsiella pneumoniae subsp. pneumoniae (strain ATCC 700721 / MGH 78578).